A 1012-amino-acid chain; its full sequence is Structural polyprotein (1012 aa).

Asp30 is an a divalent metal cation binding site. The region spanning Ala513–Ala755 is the Peptidase S50 domain. Ser652 functions as the Nucleophile in the catalytic mechanism. Residue Lys692 is part of the active site. Residues Ala969–Glu1012 are disordered. Over residues Arg975–Pro986 the composition is skewed to basic residues. The interval Ile1003 to Glu1012 is interaction with VP1 protein.

As to quaternary structure, homotrimer. A central divalent metal stabilizes the VP2 trimer. Interacts with host ITGA4/ITGB1. Homodimer. Interacts (via C-terminus) with VP1 in the cytoplasm. Interacts with VP2. Specific enzymatic cleavages yield mature proteins. The capsid assembly seems to be regulated by polyprotein processing. The protease VP4 cleaves itself off the polyprotein, thus releasing pre-VP2 and VP3 within the infected cell. During capsid assembly, the C-terminus of pre-VP2 is further processed by VP4, giving rise to VP2, the external capsid protein and three small peptides that all stay closely associated with the capsid.

Its subcellular location is the virion. The protein resides in the host cytoplasm. Its function is as follows. Capsid protein VP2 self assembles to form an icosahedral capsid with a T=13 symmetry, about 70 nm in diameter, and consisting of 260 VP2 trimers. The capsid encapsulates the genomic dsRNA. VP2 is also involved in attachment and entry into the host cell by interacting with host ITGA4/ITGB1. Functionally, the precursor of VP2 plays an important role in capsid assembly. First, pre-VP2 and VP2 oligomers assemble to form a procapsid. Then, the pre-VP2 intermediates may be processed into VP2 proteins by proteolytic cleavage mediated by VP4 to obtain the mature virion. The final capsid is composed of pentamers and hexamers but VP2 has a natural tendency to assemble into all-pentameric structures. Therefore pre-VP2 may be required to allow formation of the hexameric structures. Protease VP4 is a serine protease that cleaves the polyprotein into its final products. Pre-VP2 is first partially cleaved, and may be completely processed by VP4 upon capsid maturation. In terms of biological role, capsid protein VP3 plays a key role in virion assembly by providing a scaffold for the capsid made of VP2. May self-assemble to form a T=4-like icosahedral inner-capsid composed of at least 180 trimers. Plays a role in genomic RNA packaging by recruiting VP1 into the capsid and interacting with the dsRNA genome segments to form a ribonucleoprotein complex. Additionally, the interaction of the VP3 C-terminal tail with VP1 removes the inherent structural blockade of the polymerase active site. Thus, VP3 can also function as a transcriptional activator. Its function is as follows. Structural peptide 1 is a small peptide derived from pre-VP2 C-terminus. It destabilizes and perforates cell membranes, suggesting a role during entry. Functionally, structural peptide 2 is a small peptide derived from pre-VP2 C-terminus. It is not essential for the virus viability, but viral growth is affected when missing. Structural peptide 3 is a small peptide derived from pre-VP2 C-terminus. It is not essential for the virus viability, but viral growth is affected when missing. In terms of biological role, structural peptide 4 is a small peptide derived from pVP2 C-terminus. It is essential for the virus viability. This Gallus gallus (Chicken) protein is Structural polyprotein.